Consider the following 269-residue polypeptide: Putative hydro-lyase RL2444 (269 aa).

The protein belongs to the D-glutamate cyclase family.

The chain is Putative hydro-lyase RL2444 from Rhizobium johnstonii (strain DSM 114642 / LMG 32736 / 3841) (Rhizobium leguminosarum bv. viciae).